A 311-amino-acid polypeptide reads, in one-letter code: Fructose-1,6-bisphosphatase class 1 (311 aa).

Positions 90, 110, 112, and 113 each coordinate Mg(2+). Residues 113 to 116 (DGSS), tyrosine 221, and lysine 251 contribute to the substrate site. Residue glutamate 257 participates in Mg(2+) binding.

This sequence belongs to the FBPase class 1 family. Homotetramer. The cofactor is Mg(2+).

It localises to the cytoplasm. It carries out the reaction beta-D-fructose 1,6-bisphosphate + H2O = beta-D-fructose 6-phosphate + phosphate. It functions in the pathway carbohydrate biosynthesis; gluconeogenesis. The chain is Fructose-1,6-bisphosphatase class 1 from Methanospirillum hungatei JF-1 (strain ATCC 27890 / DSM 864 / NBRC 100397 / JF-1).